A 348-amino-acid polypeptide reads, in one-letter code: Protein RecA (348 aa).

Position 64 to 71 (64 to 71) interacts with ATP; sequence GPESSGKT. Over residues 325-335 the composition is skewed to basic and acidic residues; the sequence is YEIDGASKEPL. The segment at 325-348 is disordered; that stretch reads YEIDGASKEPLEETEETLSLLDDE. Residues 336–348 show a composition bias toward acidic residues; sequence EETEETLSLLDDE.

The protein belongs to the RecA family.

It is found in the cytoplasm. Functionally, can catalyze the hydrolysis of ATP in the presence of single-stranded DNA, the ATP-dependent uptake of single-stranded DNA by duplex DNA, and the ATP-dependent hybridization of homologous single-stranded DNAs. It interacts with LexA causing its activation and leading to its autocatalytic cleavage. The polypeptide is Protein RecA (Listeria seeligeri).